The following is a 136-amino-acid chain: Galectin-7 (136 aa).

Positions 6-136 constitute a Galectin domain; that stretch reads HKTPLPQGVR…DVQLHSVKIF (131 aa). An a beta-D-galactoside-binding site is contributed by 70–76; the sequence is WGREERG.

As to quaternary structure, monomer.

It is found in the cytoplasm. It localises to the nucleus. The protein resides in the secreted. Could be involved in cell-cell and/or cell-matrix interactions necessary for normal growth control. Pro-apoptotic protein that functions intracellularly upstream of JNK activation and cytochrome c release. The chain is Galectin-7 (Lgals7) from Rattus norvegicus (Rat).